A 201-amino-acid polypeptide reads, in one-letter code: MARYTGPITRKSRRLRVDLVGGDQAFERRPYPPGQHGRARIKESEYLLQLQEKQKARFTYGVMEKQFRLYYKEANNRPGKTGENLLRILESRLDNVVYRAGLARTRRQARQLVTHGHLLVNNKKVDIPSYRVSQYDIIDVKEKSLSTLPFQVARETVGDRPVPGWLQVVGSRLRILVHQLPERAQIDIALQEQLIVEYYSK.

Residues 91-157 enclose the S4 RNA-binding domain; the sequence is SRLDNVVYRA…LPFQVARETV (67 aa).

It belongs to the universal ribosomal protein uS4 family. Part of the 30S ribosomal subunit. Contacts protein S5. The interaction surface between S4 and S5 is involved in control of translational fidelity.

Its function is as follows. One of the primary rRNA binding proteins, it binds directly to 16S rRNA where it nucleates assembly of the body of the 30S subunit. Functionally, with S5 and S12 plays an important role in translational accuracy. The protein is Small ribosomal subunit protein uS4 of Rhodococcus erythropolis (strain PR4 / NBRC 100887).